The following is a 335-amino-acid chain: Beta-hexosaminidase (335 aa).

Residues aspartate 60, arginine 68, arginine 133, and 163-164 each bind substrate; that span reads KH. Histidine 176 acts as the Proton donor/acceptor in catalysis. Catalysis depends on aspartate 247, which acts as the Nucleophile.

This sequence belongs to the glycosyl hydrolase 3 family. NagZ subfamily.

Its subcellular location is the cytoplasm. It catalyses the reaction Hydrolysis of terminal non-reducing N-acetyl-D-hexosamine residues in N-acetyl-beta-D-hexosaminides.. It functions in the pathway cell wall biogenesis; peptidoglycan recycling. Plays a role in peptidoglycan recycling by cleaving the terminal beta-1,4-linked N-acetylglucosamine (GlcNAc) from peptide-linked peptidoglycan fragments, giving rise to free GlcNAc, anhydro-N-acetylmuramic acid and anhydro-N-acetylmuramic acid-linked peptides. This Stenotrophomonas maltophilia (strain K279a) protein is Beta-hexosaminidase.